Reading from the N-terminus, the 473-residue chain is Chromosomal replication initiator protein DnaA (473 aa).

The domain I, interacts with DnaA modulators stretch occupies residues 1–76; that stretch reads MNYHSTNVNE…RTVLGRVIGP (76 aa). A domain II region spans residues 76–135; sequence PNASLQYNALVDNSSPKYPGTVTLAGCADGGQAAEQFDVNLLHRHMPNAATHSEAQDFDT. The interval 136–353 is domain III, AAA+ region; sequence QLNSRLNFRN…GTLVSLITNS (218 aa). ATP is bound by residues Gly-181, Gly-183, Lys-184, and Thr-185. Residues 354–473 form a domain IV, binds dsDNA region; the sequence is VVVGKEIDLT…VERAEQLIAN (120 aa).

This sequence belongs to the DnaA family. Oligomerizes as a right-handed, spiral filament on DNA at oriC.

The protein resides in the cytoplasm. Functionally, plays an essential role in the initiation and regulation of chromosomal replication. ATP-DnaA binds to the origin of replication (oriC) to initiate formation of the DNA replication initiation complex once per cell cycle. Binds the DnaA box (a 9 base pair repeat at the origin) and separates the double-stranded (ds)DNA. Forms a right-handed helical filament on oriC DNA; dsDNA binds to the exterior of the filament while single-stranded (ss)DNA is stabiized in the filament's interior. The ATP-DnaA-oriC complex binds and stabilizes one strand of the AT-rich DNA unwinding element (DUE), permitting loading of DNA polymerase. After initiation quickly degrades to an ADP-DnaA complex that is not apt for DNA replication. Binds acidic phospholipids. This chain is Chromosomal replication initiator protein DnaA, found in Porphyromonas gingivalis (strain ATCC 33277 / DSM 20709 / CIP 103683 / JCM 12257 / NCTC 11834 / 2561).